A 283-amino-acid chain; its full sequence is ATP phosphoribosyltransferase (283 aa).

Belongs to the ATP phosphoribosyltransferase family. Long subfamily. Mg(2+) is required as a cofactor.

It localises to the cytoplasm. It carries out the reaction 1-(5-phospho-beta-D-ribosyl)-ATP + diphosphate = 5-phospho-alpha-D-ribose 1-diphosphate + ATP. Its pathway is amino-acid biosynthesis; L-histidine biosynthesis; L-histidine from 5-phospho-alpha-D-ribose 1-diphosphate: step 1/9. Its activity is regulated as follows. Feedback inhibited by histidine. Catalyzes the condensation of ATP and 5-phosphoribose 1-diphosphate to form N'-(5'-phosphoribosyl)-ATP (PR-ATP). Has a crucial role in the pathway because the rate of histidine biosynthesis seems to be controlled primarily by regulation of HisG enzymatic activity. The polypeptide is ATP phosphoribosyltransferase (Azobacteroides pseudotrichonymphae genomovar. CFP2).